The chain runs to 596 residues: MTDLTAQDAAWSTRDHLDDPVIGELRNRFGPDAFTVQATRTGIPVVWVKREQLLEVGDFLKKLPKPYVMLFDLHGMDERLRTHRDGLPAADFSVFYHLISIERNRDIMLKVALSENDLRVPTFTKLFPNANWYERETWEMFGIDIEGHPHLTRIMMPQTWEGHPLRKDYPARATEFDPFELTKAKQDLEMEALTFKPEDWGMKRGTDNEDFMFLNLGPNHPSAHGAFRIILQLDGEEIVDCVPDIGYHHRGAEKMGERQSWHSYIPYTDRIEYLGGCVNEMPYVLAVEKLAGITVSDRVNVIRVMLSELFRINSHLLYISTFIQDVGAMTPVFFAFTDRQKIYDLVEAITGFRMHPAWFRIGGVAHDLPRGWDRLLREFLEWMPKRLDSYEKAALRNTILKGRSQGVAAYGAKEALEWGTTGAGLRATGIDFDVRKWRPYSGYENFDFEVPVGGGVSDCYTRVMLKVEELRQSLRILQQCLDNMPEGPFKADHPLTTPPPKERTLQHIETLITHFLQVSWGPVMPAQESFQMVEATKGINSYYLTSDGSTMSYRTRVRTPSFAHLQQIPSAIRGSLVSDLIVYLGSIDFVMSDVDR.

The segment at 1 to 186 (MTDLTAQDAA…DPFELTKAKQ (186 aa)) is NADH dehydrogenase I subunit C. The interval 210-596 (DFMFLNLGPN…IDFVMSDVDR (387 aa)) is NADH dehydrogenase I subunit D.

The protein in the N-terminal section; belongs to the complex I 30 kDa subunit family. In the C-terminal section; belongs to the complex I 49 kDa subunit family. As to quaternary structure, NDH-1 is composed of 13 different subunits. Subunits NuoB, CD, E, F, and G constitute the peripheral sector of the complex.

The protein localises to the cell inner membrane. It carries out the reaction a quinone + NADH + 5 H(+)(in) = a quinol + NAD(+) + 4 H(+)(out). Functionally, NDH-1 shuttles electrons from NADH, via FMN and iron-sulfur (Fe-S) centers, to quinones in the respiratory chain. The immediate electron acceptor for the enzyme in this species is believed to be ubiquinone. Couples the redox reaction to proton translocation (for every two electrons transferred, four hydrogen ions are translocated across the cytoplasmic membrane), and thus conserves the redox energy in a proton gradient. The polypeptide is NADH-quinone oxidoreductase subunit C/D (Salmonella choleraesuis (strain SC-B67)).